The following is a 158-amino-acid chain: MSEEAPVHERTFVMVKPDGVQRGLIGEIISRFEDRGLTLVGGKFTRLDTEVARDHYGEHKDKPFFDDLVSFITAGPVFAMVWEGADATRQVRSMVGETDPAESAPGTIRGDYGLDLGRNVIHASDHEDEGANEREIQLFFDESELYTYERIDDPWLYE.

Lysine 16, phenylalanine 64, arginine 92, threonine 98, arginine 109, and asparagine 119 together coordinate ATP. Catalysis depends on histidine 122, which acts as the Pros-phosphohistidine intermediate.

The protein belongs to the NDK family. The cofactor is Mg(2+).

The protein localises to the cytoplasm. It carries out the reaction a 2'-deoxyribonucleoside 5'-diphosphate + ATP = a 2'-deoxyribonucleoside 5'-triphosphate + ADP. The enzyme catalyses a ribonucleoside 5'-diphosphate + ATP = a ribonucleoside 5'-triphosphate + ADP. In terms of biological role, major role in the synthesis of nucleoside triphosphates other than ATP. The ATP gamma phosphate is transferred to the NDP beta phosphate via a ping-pong mechanism, using a phosphorylated active-site intermediate. This chain is Nucleoside diphosphate kinase, found in Haloquadratum walsbyi (strain DSM 16790 / HBSQ001).